Consider the following 78-residue polypeptide: Acyl carrier protein (78 aa).

A Carrier domain is found at serine 2 to alanine 77. O-(pantetheine 4'-phosphoryl)serine is present on serine 37.

It belongs to the acyl carrier protein (ACP) family. Post-translationally, 4'-phosphopantetheine is transferred from CoA to a specific serine of apo-ACP by AcpS. This modification is essential for activity because fatty acids are bound in thioester linkage to the sulfhydryl of the prosthetic group.

Its subcellular location is the cytoplasm. The protein operates within lipid metabolism; fatty acid biosynthesis. Its function is as follows. Carrier of the growing fatty acid chain in fatty acid biosynthesis. The protein is Acyl carrier protein of Xanthobacter autotrophicus (strain ATCC BAA-1158 / Py2).